Reading from the N-terminus, the 507-residue chain is Proton-coupled zinc antiporter SLC30A1 (507 aa).

The Cytoplasmic portion of the chain corresponds to 1–10 (MGCWGRNRGR). Residues 11–31 (LLCMLALTFMFMVLEVVVSRV) traverse the membrane as a helical segment. Residues 32–35 (TSSL) lie on the Extracellular side of the membrane. Residues 36–56 (AMLSDSFHMLSDVLALVVALV) form a helical membrane-spanning segment. H43 and D47 together coordinate Zn(2+). Topologically, residues 57-78 (AERFARRTHATQKNTFGWIRAE) are cytoplasmic. The helical transmembrane segment at 79 to 99 (VMGALVNAIFLTGLCFAILLE) threads the bilayer. The Extracellular portion of the chain corresponds to 100-113 (AIERFIEPHEMQQP). A helical membrane pass occupies residues 114-134 (LVVLGVGVAGLLVNVLGLCLF). Over 135 to 248 (HHHSGFSQDS…RAGQLNMRGV (114 aa)) the chain is Cytoplasmic. Positions 142-217 (QDSGHGHSHG…DPENPRSGDT (76 aa)) are disordered. A 6 X 2 AA approximate repeats of H-G region spans residues 146–158 (HGHSHGGHGHGHG). Positions 147 to 167 (GHSHGGHGHGHGLPKGPRVKS) are enriched in basic residues. Residues 189 to 201 (TNTLVANTSNSNG) are compositionally biased toward polar residues. Residues 249 to 269 (FLHVLGDALGSVIVVVNALVF) form a helical membrane-spanning segment. Residues H251 and D255 each contribute to the Zn(2+) site. The Extracellular segment spans residues 270–308 (YFSWKGCSEGDFCVNPCFPDPCKAFVEIINSTHASVYEA). N299 carries N-linked (GlcNAc...) asparagine glycosylation. The helical transmembrane segment at 309-329 (GPCWVLYLDPTLCVVMVCILL) threads the bilayer. Topologically, residues 330-507 (YTTYPLLKES…MPNKQPESSL (178 aa)) are cytoplasmic. S506 is subject to Phosphoserine.

Belongs to the cation diffusion facilitator (CDF) transporter (TC 2.A.4) family. SLC30A subfamily. As to quaternary structure, homodimer. Interacts with TMEM163. Interacts and forms a complex with TMC6 and TMC8; the interaction regulates zinc transport into the ER. (Microbial infection) Interacts with human papillomavirus 16/HPV16 protein E5; the interaction alleviates SLC30A1-mediated transcription factors inhibition. In terms of processing, N-glycosylated at Asn-299. N-glycosylation promotes endocytosis and degradation through the proteasomal or lysosomal pathways.

The protein localises to the cell membrane. The protein resides in the basolateral cell membrane. Its subcellular location is the cytoplasmic vesicle membrane. It localises to the cytoplasm. It is found in the endoplasmic reticulum membrane. The protein localises to the golgi apparatus membrane. The protein resides in the nucleus membrane. It carries out the reaction Zn(2+)(in) + 2 H(+)(out) = Zn(2+)(out) + 2 H(+)(in). Functionally, zinc ion:proton antiporter that could function at the plasma membrane mediating zinc efflux from cells against its electrochemical gradient protecting them from intracellular zinc accumulation and toxicity. Alternatively, could prevent the transport to the plasma membrane of CACNB2, the L-type calcium channels regulatory subunit, through a yet to be defined mechanism. By modulating the expression of these channels at the plasma membrane, could prevent calcium and zinc influx into cells. By the same mechanism, could also prevent L-type calcium channels-mediated heavy metal influx into cells. In some cells, could also function as a zinc ion:proton antiporter mediating zinc entry into the lumen of cytoplasmic vesicles. In macrophages, can increase zinc ions concentration into the lumen of cytoplasmic vesicles containing engulfed bacteria and could help inactivate them. Forms a complex with TMC6/EVER1 and TMC8/EVER2 at the ER membrane of keratynocytes which facilitates zinc uptake into the ER. Down-regulates the activity of transcription factors induced by zinc and cytokines. This chain is Proton-coupled zinc antiporter SLC30A1, found in Homo sapiens (Human).